A 199-amino-acid polypeptide reads, in one-letter code: GTP-binding protein Di-Ras2 (199 aa).

GTP-binding positions include 14–21 (GAGGVGKS), 33–39 (RESYIPT), 61–65 (DTTGS), and 121–124 (NKCD). A Phosphoserine modification is found at S35. The Effector region signature appears at 36–44 (YIPTVEDTY). The residue at position 126 (S126) is a Phosphoserine. 152 to 153 (AK) serves as a coordination point for GTP. Position 196 is a cysteine methyl ester (C196). C196 is lipidated: S-geranylgeranyl cysteine. The propeptide at 197–199 (VVM) is removed in mature form.

The protein belongs to the small GTPase superfamily. Di-Ras family. Ubiquitinated by the ECS(ASB11) complex via 'Lys-11'-linked ubiquitin chains, leading to its degradation by the proteasome.

It is found in the cell membrane. The catalysed reaction is GTP + H2O = GDP + phosphate + H(+). Displays low GTPase activity and exists predominantly in the GTP-bound form. The protein is GTP-binding protein Di-Ras2 (Diras2) of Mus musculus (Mouse).